The chain runs to 415 residues: Amino acid decarboxylase lolD2 (415 aa).

Lys62 bears the N6-(pyridoxal phosphate)lysine mark. Pyridoxal 5'-phosphate is bound by residues Ser194, Gly231, and 266 to 269 (EPGT). A substrate-binding site is contributed by 315–316 (IV). The active-site Proton donor; shared with dimeric partner is the Cys351. Residue Cys351 is modified to S-nitrosocysteine. Asp352 lines the substrate pocket. Tyr381 is a pyridoxal 5'-phosphate binding site.

This sequence belongs to the Orn/Lys/Arg decarboxylase class-II family. Homodimer. Pyridoxal 5'-phosphate serves as cofactor.

It functions in the pathway alkaloid biosynthesis. Amino acid decarboxylase; part of the gene cluster that mediates the biosynthesis of loline alkaloids, potent insecticidal agents composed of a pyrrolizidine ring system and an uncommon ether bridge linking carbons 2 and 7. Lolines are structurally differentiated by the various modifications of the L-amino group and include norloline, loline, N-methylloline, N-acetylloline, N-acetylnorloline, and N-formylloline. The first committed step is the condensation of O-acetyl-L-homoserine (derived from L-aspartic acid) and L-proline, probably catalyzed by the gamma-type pyridoxal 5'-phosphate(PLP)-dependent enzyme lolC, to give the diamino diacid, NACPP. Ensuing cyclization, decarboxylation, and acetylation steps yield 1-exo-acetamidopyrrolizidine (AcAP). LolO is required for installation of the ether bridge upon the pathway intermediate, 1-exo-acetamidopyrrolizidine (AcAP). In sequential 2-oxoglutarate- and O(2)-consuming steps, lolO removes hydrogens from C2 and C7 of AcAP to form both carbon-oxygen bonds in N-acetylnorloline (NANL), the precursor to all other lolines. The enzymes lolD, lolE, lolF and lolT have also been proposed to be involved in the ether-bridge installation. Further processing of the exocyclic moiety of NANL by fungal N-acetamidase (LolN), methyltransferase (LolM), and cytochrome P450 (LolP) enzymes, with occasional involvement of a plant acetyltransferase, generates the other known lolines. LolN transforms NANL to norlonine which is monomethylated and dimethylated to respectively lonine and N-methyllonine (NML) by lolM. LolP catalyzes hydroxylation of the methyl group in N-methylloline (NML) and further oxygenation to N-formylloline (NFL). A plant acetyltransferase is responsible for the acetylation of loline to form N-acetylloline (NAL). LolA might interact with aspartate kinase to prevent feedback inhibition of its activity by these end products and thereby promote production of L-homoserine from L-aspartate. The protein is Amino acid decarboxylase lolD2 of Epichloe uncinata (Endophyte fungus).